We begin with the raw amino-acid sequence, 194 residues long: Large ribosomal subunit protein bL25 (194 aa).

This sequence belongs to the bacterial ribosomal protein bL25 family. CTC subfamily. Part of the 50S ribosomal subunit; part of the 5S rRNA/L5/L18/L25 subcomplex. Contacts the 5S rRNA. Binds to the 5S rRNA independently of L5 and L18.

In terms of biological role, this is one of the proteins that binds to the 5S RNA in the ribosome where it forms part of the central protuberance. The protein is Large ribosomal subunit protein bL25 of Neorickettsia sennetsu (strain ATCC VR-367 / Miyayama) (Ehrlichia sennetsu).